A 143-amino-acid polypeptide reads, in one-letter code: Sirohydrochlorin cobaltochelatase (143 aa).

The Proton acceptor role is filled by His-9. His-9 contacts Co(2+). Residue His-9 participates in Ni(2+) binding. Residues Glu-45 and 70 to 75 (LAHGNH) each bind substrate. His-75 is a binding site for Co(2+). His-75 is a Ni(2+) binding site.

Belongs to the CbiX family. CbiXS subfamily. Homotetramer; dimer of dimers.

It catalyses the reaction Co-sirohydrochlorin + 2 H(+) = sirohydrochlorin + Co(2+). The enzyme catalyses Ni-sirohydrochlorin + 2 H(+) = sirohydrochlorin + Ni(2+). The protein operates within cofactor biosynthesis; adenosylcobalamin biosynthesis; cob(II)yrinate a,c-diamide from sirohydrochlorin (anaerobic route): step 1/10. In terms of biological role, catalyzes the insertion of Co(2+) into sirohydrochlorin as part of the anaerobic pathway to cobalamin biosynthesis. Involved in the biosynthesis of the unique nickel-containing tetrapyrrole coenzyme F430, the prosthetic group of methyl-coenzyme M reductase (MCR), which plays a key role in methanogenesis and anaerobic methane oxidation. Catalyzes the insertion of Ni(2+) into sirohydrochlorin to yield Ni-sirohydrochlorin. This is Sirohydrochlorin cobaltochelatase from Methanococcus aeolicus (strain ATCC BAA-1280 / DSM 17508 / OCM 812 / Nankai-3).